The following is a 173-amino-acid chain: Photosystem I assembly protein Ycf3 (173 aa).

TPR repeat units lie at residues 35-68 (AYVY…EESP), 72-105 (SETL…NSNQ), and 120-153 (GRTA…YPGG).

This sequence belongs to the Ycf3 family.

It is found in the cellular thylakoid membrane. In terms of biological role, essential for the assembly of the photosystem I (PSI) complex. May act as a chaperone-like factor to guide the assembly of the PSI subunits. In Prochlorococcus marinus (strain MIT 9303), this protein is Photosystem I assembly protein Ycf3.